We begin with the raw amino-acid sequence, 262 residues long: Carbonic anhydrase 13 (262 aa).

One can recognise an Alpha-carbonic anhydrase domain in the interval leucine 4–phenylalanine 261. Residue histidine 65 is the Proton donor/acceptor of the active site. Residues histidine 95, histidine 97, and histidine 120 each contribute to the Zn(2+) site. Threonine 200–valine 201 contacts substrate.

The protein belongs to the alpha-carbonic anhydrase family. It depends on Zn(2+) as a cofactor. In terms of tissue distribution, expressed in spleen, lung, kidney, heart, brain, skeletal muscle and testis.

The enzyme catalyses hydrogencarbonate + H(+) = CO2 + H2O. Its activity is regulated as follows. Inhibited by coumarins, sulfonamide derivatives such as acetazolamide (AZA) and Foscarnet (phosphonoformate trisodium salt). Its function is as follows. Reversible hydration of carbon dioxide. The chain is Carbonic anhydrase 13 (Ca13) from Mus musculus (Mouse).